The following is a 652-amino-acid chain: Aspartate--tRNA ligase, mitochondrial (652 aa).

Residues 1 to 46 (MYLGSWLNRLGRGLSRPIGKTKQPIWGSLSRSLTLSSQRVPEFSSF) constitute a mitochondrion transit peptide. T218 carries the post-translational modification Phosphothreonine. Position 241 is a phosphoserine (S241). An aspartate region spans residues 243–246 (QQFK). R265 provides a ligand contact to L-aspartate. ATP-binding positions include 265 to 267 (RDE) and E534. Residue R541 participates in L-aspartate binding. 583–586 (GLDR) contacts ATP.

It belongs to the class-II aminoacyl-tRNA synthetase family. Type 1 subfamily. Homodimer.

It is found in the mitochondrion matrix. It localises to the mitochondrion membrane. The catalysed reaction is tRNA(Asp) + L-aspartate + ATP = L-aspartyl-tRNA(Asp) + AMP + diphosphate. Functionally, catalyzes the attachment of aspartate to tRNA(Asp) in a two-step reaction: aspartate is first activated by ATP to form Asp-AMP and then transferred to the acceptor end of tRNA(Asp). This is Aspartate--tRNA ligase, mitochondrial (Dars2) from Rattus norvegicus (Rat).